The primary structure comprises 130 residues: uncharacterized protein (130 aa).

The tract at residues 23-130 (SHLRLLPTAN…GAHQLSSPSS (108 aa)) is disordered. A compositionally biased stretch (polar residues) spans 30 to 45 (TANSPSGSNQPTNPNR).

This is an uncharacterized protein from Homo sapiens (Human).